A 448-amino-acid polypeptide reads, in one-letter code: MTRIFGTDGVRGLANGQLTAELALDLSVAAARVLADRGEFKGHRPLAVVGRDTRISGQFLEHAVVAGLASAGVDVLRLRVLPTPAVAYLTEALGADLGVVISASHNPMPDNGIKFLARGGHKLDDAVEKLIEQHLAEEWDRPVGGDVGRVTPYATPVEEYVAHLVGTLTRSLDGIKVVLDCAHGAAYEAGPRALRAAGAEVVAIAVEPDGLNINADCGSTHLAALQAAVVEHGADVGFALDGDADRCLAVDHEGNAVDGDQILAILALGMAETGHLAKNTVVATVMSNLGFVQAMRAAGVGVRQTKVGDRYVLEAMRVSGYSLGGEQSGHVIMSEHATTGDGILTALHVLQRMAATGQSLQSLASVVTRLPQVLVNVPDVDKSRADDDAVLAAAIAEEEAALGDSGRVLLRPSGTEQLVRVMVEAATQEEAVSVAGRLADVVKRQLAL.

Catalysis depends on S104, which acts as the Phosphoserine intermediate. S104, D241, D243, and D245 together coordinate Mg(2+). A Phosphoserine modification is found at S104.

It belongs to the phosphohexose mutase family. The cofactor is Mg(2+). Activated by phosphorylation.

It catalyses the reaction alpha-D-glucosamine 1-phosphate = D-glucosamine 6-phosphate. Catalyzes the conversion of glucosamine-6-phosphate to glucosamine-1-phosphate. The protein is Phosphoglucosamine mutase of Nocardioides sp. (strain ATCC BAA-499 / JS614).